Here is a 234-residue protein sequence, read N- to C-terminus: Purine nucleoside phosphorylase DeoD-type (234 aa).

A purine D-ribonucleoside is bound at residue His4. Residues Gly20, Arg24, Arg43, and 87 to 90 contribute to the phosphate site; that span reads RVGT. Residues Glu162, 178-180, and 202-203 contribute to the a purine D-ribonucleoside site; these read EME and SD. The active-site Proton donor is the Asp203.

It belongs to the PNP/UDP phosphorylase family. In terms of assembly, homohexamer; trimer of homodimers.

It carries out the reaction a purine D-ribonucleoside + phosphate = a purine nucleobase + alpha-D-ribose 1-phosphate. The catalysed reaction is a purine 2'-deoxy-D-ribonucleoside + phosphate = a purine nucleobase + 2-deoxy-alpha-D-ribose 1-phosphate. Catalyzes the reversible phosphorolytic breakdown of the N-glycosidic bond in the beta-(deoxy)ribonucleoside molecules, with the formation of the corresponding free purine bases and pentose-1-phosphate. This is Purine nucleoside phosphorylase DeoD-type from Anoxybacillus flavithermus (strain DSM 21510 / WK1).